The sequence spans 233 residues: Purine nucleoside phosphorylase DeoD-type (233 aa).

Histidine 4 lines the a purine D-ribonucleoside pocket. Phosphate-binding positions include glycine 20, arginine 24, arginine 43, and 87–90; that span reads RVGT. A purine D-ribonucleoside is bound by residues 178–180 and 202–203; these read EME and SD. Aspartate 203 functions as the Proton donor in the catalytic mechanism.

This sequence belongs to the PNP/UDP phosphorylase family. Homohexamer; trimer of homodimers.

The enzyme catalyses a purine D-ribonucleoside + phosphate = a purine nucleobase + alpha-D-ribose 1-phosphate. The catalysed reaction is a purine 2'-deoxy-D-ribonucleoside + phosphate = a purine nucleobase + 2-deoxy-alpha-D-ribose 1-phosphate. Catalyzes the reversible phosphorolytic breakdown of the N-glycosidic bond in the beta-(deoxy)ribonucleoside molecules, with the formation of the corresponding free purine bases and pentose-1-phosphate. The sequence is that of Purine nucleoside phosphorylase DeoD-type from Listeria monocytogenes serotype 4b (strain CLIP80459).